A 303-amino-acid chain; its full sequence is Phytochrome-associated serine/threonine-protein phosphatase 1 (303 aa).

The Zn(2+) site is built by D50, H52, D78, and N110. The Proton donor role is filled by H111. The Zn(2+) site is built by H160 and H234.

The protein belongs to the PPP phosphatase family. PP-6 (PP-V) subfamily. Interacts with PHYA and PHYB, mostly when they are phosphorylated and in Pfr forms. Interacts with TAP46. Interacts with PIN1 and PIN2. Interacts with ABI5. Interacts with PIF3 and PIF4. Protein phosphatase 6 (PP6) holoenzyme is a heterotrimeric complex formed by the catalytic subunit FYPP, a SAPS domain-containing subunit (SAL) and a protein phosphatase 2A regulatory subunit A (PP2AA). The cofactor is Zn(2+). As to expression, mostly expressed in flowers. Also detected to a lower extent in stems and leaves. Expressed in roots.

The protein resides in the cytoplasm. It carries out the reaction O-phospho-L-seryl-[protein] + H2O = L-seryl-[protein] + phosphate. The enzyme catalyses O-phospho-L-threonyl-[protein] + H2O = L-threonyl-[protein] + phosphate. In terms of biological role, catalytic subunit of protein phosphatase 6 (PP6). Dephosphorylates phosphorylated phytochromes, with a preference toward Pfr forms. Plays a major role in the photoperiodic control of flowering time in long days by modulating phytochrome signals in flowering time control. Involved in the regulation of polar auxin transport in roots. Dephosphorylates directly the auxin efflux carriers PIN1 and PIN2, thus promoting their proper polar localization in root cell plasma membrane. Acts antagonistically with the protein kinase PID to regulate the reversible phosphorylation of PIN and polar targeting, subsequently impacting polar auxin transport and plant development. Involved in the regulation of abscisic acid (ABA) signaling during seed germination and postgermination seedling growth. Functions as a negative regulator of ABA signaling through direct dephosphorylation and destabilization of ABI5. Acts antagonistically with the protein kinase SRK2E/SNRK2.6 to regulate ABI5 phosphorylation and ABA responses. Involved in the regulation of phosphorylation status in hypocotyl phototropism. Involved in the negative regulation of photomorphogenesis by controlling the stability and transcriptional activity of PIF3 and PIF4 proteins in the dark, via the regulation of their phosphorylation status. The polypeptide is Phytochrome-associated serine/threonine-protein phosphatase 1 (Arabidopsis thaliana (Mouse-ear cress)).